The chain runs to 204 residues: Urease accessory protein UreG (204 aa).

Gly-11–Thr-18 lines the GTP pocket.

Belongs to the SIMIBI class G3E GTPase family. UreG subfamily. Homodimer. UreD, UreF and UreG form a complex that acts as a GTP-hydrolysis-dependent molecular chaperone, activating the urease apoprotein by helping to assemble the nickel containing metallocenter of UreC. The UreE protein probably delivers the nickel.

The protein localises to the cytoplasm. In terms of biological role, facilitates the functional incorporation of the urease nickel metallocenter. This process requires GTP hydrolysis, probably effectuated by UreG. The chain is Urease accessory protein UreG from Staphylococcus aureus (strain Mu3 / ATCC 700698).